Consider the following 305-residue polypeptide: MNMQEVYEYLSTVLPEGHVKQDEMLKNHTHIKVGGKADVFVAPTNYDEIQEVIKYANKYNIPVTFLGNGSNVIIKDGGIRGITVSLIHITGVTVTGTTIVAQCGAAIIDVSRIALDHNLTGLEFACGIPGSVGGALYMNAGAYGGEISFVLTEAVVMTGDGELRTLTKEAFEFGYRKSVFANNHYIILEARFELEEGLYEEIKAKMDDLTFKRESKQPLEYPSCGSVFKRPPNNFAGKLIQESGLQGKRIGGVEVSLKHAGFMVNVDNGTAQDYIDLIHFVQKTVEEKFGVKLEREVRIIGEDKE.

One can recognise an FAD-binding PCMH-type domain in the interval 33–197 (VGGKADVFVA…LEARFELEEG (165 aa)). Arginine 176 is a catalytic residue. Serine 226 functions as the Proton donor in the catalytic mechanism. Glutamate 296 is a catalytic residue.

This sequence belongs to the MurB family. FAD serves as cofactor.

Its subcellular location is the cytoplasm. It carries out the reaction UDP-N-acetyl-alpha-D-muramate + NADP(+) = UDP-N-acetyl-3-O-(1-carboxyvinyl)-alpha-D-glucosamine + NADPH + H(+). The protein operates within cell wall biogenesis; peptidoglycan biosynthesis. Functionally, cell wall formation. The sequence is that of UDP-N-acetylenolpyruvoylglucosamine reductase 2 from Bacillus thuringiensis subsp. konkukian (strain 97-27).